The sequence spans 386 residues: Succinyl-diaminopimelate desuccinylase (386 aa).

His75 contacts Zn(2+). Asp77 is an active-site residue. Asp108 contacts Zn(2+). Catalysis depends on Glu138, which acts as the Proton acceptor. Zn(2+) is bound by residues Glu139, Glu167, and His356.

It belongs to the peptidase M20A family. DapE subfamily. As to quaternary structure, homodimer. It depends on Zn(2+) as a cofactor. Co(2+) serves as cofactor.

The enzyme catalyses N-succinyl-(2S,6S)-2,6-diaminopimelate + H2O = (2S,6S)-2,6-diaminopimelate + succinate. The protein operates within amino-acid biosynthesis; L-lysine biosynthesis via DAP pathway; LL-2,6-diaminopimelate from (S)-tetrahydrodipicolinate (succinylase route): step 3/3. Functionally, catalyzes the hydrolysis of N-succinyl-L,L-diaminopimelic acid (SDAP), forming succinate and LL-2,6-diaminopimelate (DAP), an intermediate involved in the bacterial biosynthesis of lysine and meso-diaminopimelic acid, an essential component of bacterial cell walls. This Caulobacter vibrioides (strain ATCC 19089 / CIP 103742 / CB 15) (Caulobacter crescentus) protein is Succinyl-diaminopimelate desuccinylase.